A 101-amino-acid polypeptide reads, in one-letter code: Feather keratin Cos2-2 (101 aa).

At Ser2 the chain carries N-acetylserine.

It belongs to the avian keratin family. In terms of assembly, the avian keratins (F-ker, S-ker, C-ker and B-ker) are a complex mixture of very similar polypeptides.

This Columba livia (Rock dove) protein is Feather keratin Cos2-2.